We begin with the raw amino-acid sequence, 193 residues long: Peptidyl-tRNA hydrolase (193 aa).

Tyr16 is a tRNA binding site. Residue His21 is the Proton acceptor of the active site. Residues Phe67, Asn69, and Asn115 each contribute to the tRNA site.

The protein belongs to the PTH family. Monomer.

The protein localises to the cytoplasm. It catalyses the reaction an N-acyl-L-alpha-aminoacyl-tRNA + H2O = an N-acyl-L-amino acid + a tRNA + H(+). Its function is as follows. Hydrolyzes ribosome-free peptidyl-tRNAs (with 1 or more amino acids incorporated), which drop off the ribosome during protein synthesis, or as a result of ribosome stalling. Catalyzes the release of premature peptidyl moieties from peptidyl-tRNA molecules trapped in stalled 50S ribosomal subunits, and thus maintains levels of free tRNAs and 50S ribosomes. The sequence is that of Peptidyl-tRNA hydrolase from Psychrobacter arcticus (strain DSM 17307 / VKM B-2377 / 273-4).